Reading from the N-terminus, the 181-residue chain is Large ribosomal subunit protein uL6 (181 aa).

It belongs to the universal ribosomal protein uL6 family. Part of the 50S ribosomal subunit.

Functionally, this protein binds to the 23S rRNA, and is important in its secondary structure. It is located near the subunit interface in the base of the L7/L12 stalk, and near the tRNA binding site of the peptidyltransferase center. The protein is Large ribosomal subunit protein uL6 of Ruthia magnifica subsp. Calyptogena magnifica.